Here is a 423-residue protein sequence, read N- to C-terminus: COP9 signalosome complex subunit 3 (423 aa).

One can recognise a PCI domain in the interval 197–365; sequence NFERALYFYE…GMVCFHDNPE (169 aa). The segment at 403–423 is disordered; that stretch reads FVQKSMGSQDDDSGSKPSSYS.

The protein belongs to the CSN3 family. In terms of assembly, component of the CSN complex, probably composed of cops1, cops2, cops3, cops4, cops5, cops6, cops7, cops8 and cops9.

The protein localises to the cytoplasm. It localises to the nucleus. Component of the COP9 signalosome complex (CSN), a complex involved in various cellular and developmental processes. The CSN complex is an essential regulator of the ubiquitin (Ubl) conjugation pathway by mediating the deneddylation of the cullin subunits of E3 ligase complexes, leading to modify the Ubl ligase activity. This chain is COP9 signalosome complex subunit 3 (cops3), found in Xenopus tropicalis (Western clawed frog).